The sequence spans 307 residues: Acyl transferase (307 aa).

Catalysis depends on charge relay system residues Ser-116, Asp-213, and His-243.

Belongs to the LuxD family.

It participates in lipid metabolism; fatty acid reduction for biolumincescence. In terms of biological role, acyl transferase is part of the fatty acid reductase system required for aldehyde biosynthesis; it produces fatty acids for the luminescent reaction. The protein is Acyl transferase of Aliivibrio fischeri (strain ATCC 700601 / ES114) (Vibrio fischeri).